Reading from the N-terminus, the 1025-residue chain is MLREIVARQDWQTQAITAVNRLPAHTPLFSWRSEAAARDDLASPSRTLLDGEWRFSFFEAPELVPEHWLVEDLPDACAIKVPGNWQLDAAYPGLRLATDVPIYTNIKYPFPCDPPRVPAENPTGCYSREFSVPADWLASGQTRIIFDGVDSAFHLFCNGRWVGYSQDSRLPAEFDLTSFLCGGDNRLAVLVLRWSDGSYLEDQDMWRMSGIFRSVSLLHKPVRHLMDIRVTPELDACYRDGRLKIALQAANGAGLSVAACLYDGGERVATLRQPIGTQAIDEKGAYDDRAECWLEVAAPRKWSAETPHLYRLTLTLLDEQGEPIESEAYDVGFRAVEIRGGLLRVNGQPLLIRGANRHEHDVASGHVVTPAAIEQDLLLMKRHNFNSVRCSHYPNHPELYRLCDRLGLYVVDEANLETHGMTPMGRLARDPAWSNAFLERVTRMVARDFNHPSIIIWSLGNESGYGPAHDAMYGWVKRADPSRPVQYEGGGADTPATDIICPMYARTHQDQPFPAVPKWALAKWIGLPGETRPLILCEYAHAMGNSLGGYAHYWQAFRDHPRLQGGFVWDWVDQGLDKLTDDGRHFWAYGGDFGDTPNDRQFCCNGLVFPDRTPHPALFEARRAQQPFGLTLLERQPLTVEIRSEYLFRETDNERLQWRLCEDGVVVSQGECPLTLAPQGSMMLTLLERLPAFAPGALAWLDLAIVQPAATPWSAVGHEVARQQCMLPAPLSLPVARTPATFIELADGWQIRAAASEWRLDKASGRVQSWCKLGREQLKEAIADHFYRAPLDNDIGTSEADHADPNAWIARWQEAGLNELQHRCLDMVVSPDQGVVTVHHGYFVGDALKLLTRWRHEFDQDGAMRLAIEVQVAAEMPSLPRIGARLWLTDEVLATGEEVSWLGRGPHENYPDRLLAADLGRWQSPLDVLHTAYVFPTDNGLRCDTRQLQLGSIEVEGLFHFSLSRFSQQQLAQARHQTDLVAEGGLHLCLDGFHMGIGGDDSWSQSVRPEYWLQPGGYYWNCVLR.

Residues Asn-105 and Asp-204 each contribute to the substrate site. Asp-204 serves as a coordination point for Na(+). The Mg(2+) site is built by Glu-417, His-419, and Glu-462. Substrate is bound by residues Glu-462 and 538–541; that span reads EYAH. Residue Glu-462 is the Proton donor of the active site. Glu-538 (nucleophile) is an active-site residue. Asn-598 provides a ligand contact to Mg(2+). Na(+) is bound by residues Phe-602 and Asn-605. Positions 605 and 1003 each coordinate substrate.

The protein belongs to the glycosyl hydrolase 2 family. Homotetramer. It depends on Mg(2+) as a cofactor. Na(+) is required as a cofactor.

The enzyme catalyses Hydrolysis of terminal non-reducing beta-D-galactose residues in beta-D-galactosides.. This chain is Beta-galactosidase, found in Aeromonas hydrophila subsp. hydrophila (strain ATCC 7966 / DSM 30187 / BCRC 13018 / CCUG 14551 / JCM 1027 / KCTC 2358 / NCIMB 9240 / NCTC 8049).